A 385-amino-acid polypeptide reads, in one-letter code: MDVQKWYLRTSKLALALAIIRSKPADKSSREYTEHLAMLLSEEQSKWRSKVEILEAEVMQLRQKLLVSRLCSGSFKSGYVSSQLEAQEPKSSESTLTSMEDSGCDLSNEQRTESSDLSQHFVESCTPTHFPPLPLVKRPCAILQNPLSSHMQFLQYLLELKNLTESGNLKRDLTHFEKDSSTVSDSVFQLLDGLITFYRNPKLPFSRFWTEAVGTLASLISDYNLSSHILKKCSKKLEEFEKTLLHAILGNNHINQFQVQHYVSQSLVTLGNCSLLRKSIISLLLSEVNGFADDLGAINQEQASYDVSRYENIFYLFWVLEQLLQKETEEGNTSSIGHDDQEIKKFLQKHDETIFQLSDAFPLFTFYLWRVGILLSSAQIETLRK.

The interaction with REC114 stretch occupies residues 1-126 (MDVQKWYLRT…LSQHFVESCT (126 aa)). The interval 86-110 (AQEPKSSESTLTSMEDSGCDLSNEQ) is disordered. Polar residues predominate over residues 92–107 (SESTLTSMEDSGCDLS).

The protein belongs to the MEI4L family. In terms of assembly, part of the MCD recombinosome complex, at least composed of IHO1, REC114 and MEI4. Forms a complex with REC114; the interaction is required for MEI4 stability. Interacts (via N-terminal domain) with REC114 (via C-terminal domain). Interacts with IHO1.

The protein localises to the chromosome. Functionally, required for DNA double-strand breaks (DSBs) formation in unsynapsed regions during meiotic recombination. Probably acts by forming a complex with IHO1 and REC114, which activates DSBs formation in unsynapsed regions, an essential step to ensure completion of synapsis. This Homo sapiens (Human) protein is Meiosis-specific protein MEI4.